A 1228-amino-acid chain; its full sequence is MHTRMQIRNRVNFGKITDLNLLPNLIYVQKKSFDWFLQSEVKDPTKRLNQGLEAVFRESFPIESPNNDMVMEYGHYVLGEPKRDPQECKDTDSSFAVPLKAVIRLIIKDTGEIREQVVYMGDLPVMTDHGTFIINGAERVVVSQLHRSPGIFFSYDQVRDTFSARVIPYRGSWLEFEMDNKGILVAKIDRKKNFPATLLVKAMGMGTNEEVLRLFYGSSKMKIAGANPKDLKRLIGRRTIADIINMETGEVMLDAGSKINEDNISILREMKVKEVDVIEFPKGKDNPVLINCLEKDGVNDYEDAVKKFHTIMRPGEPSTIENAEAELKRLFFSPKTFDLGIVGRYKINSKFEFNNPKEFSKADDRVLRKQDIIETVRYLVMLMSEAENYYPDDIDHLGNRRIRSVGELIANQLKLGFSRVERVIKERMTVQEPEQQTPQLLISIKPITAVINEFFGSSQLSQFMDQTNPLAELTHKRRLNALGPGGLSRDRAGFEVRDVHYSHYGRMCPIETPEGPNIGLILSMSSFARVNDYGFIETPYRLVKNGKVQKQVEYLTADKEEYHYMAQSNSTVDEKGEFTSKLISTRHRGDFPFRSPAEIQYMDLAPLQVVSVSTALIPFLEHDDANRALMGSNMQRQAVPLLTEEAPFVGTGMEARAAYDAGVCIVAKKDGVVSKVDATGVWIKEDQSKEIVHYPLIKFKKTNQGTCFNQKPNVSMLHTTTGGKVSKVSKERVEVTTPNGEKETHELLLSDEVQFHAVVKEGQEVGIGAPVAGQIIKGEKYGDFGQILQKGTVLANGPSTDAGYLALGRNVLVAFMPWEGYNFEDAILISERIIKDDVFSSIHIEEFEIQARETKLGQEQITRDIPNLSDKAFRDLDESGVIRVGAEVKPGDILVGMVTPKGETDLTPEYKLLHSIFGEKAKEVRDSSLRMPNGFEGTVIDIKRYSRETGDELAAGVEEMVKVYVARKRKLLVGDKMAGRHGNKGVVARVMAQEDMPYMEDGSPVDIVLNPLGVPSRMNLGQIFETQLGFAAKKLGINFETPVFDGASEGDVNDFCKKAGLPENSKFQLYDGRTGEKFINQVFCGYIYMLKLAHLVDDKIHARSTGPYSLVTQQPLGGKAQFGGQRLGEMEVWALEAYGASHTLQELLTIKSDDMLGRARIYEAIVKGIHSIKPGIPESFNVLVQELRGLALDIIIKDSEGLEVDISDYEDEFSKNKKKIKFETIENV.

This sequence belongs to the RNA polymerase beta chain family. The RNAP catalytic core consists of 2 alpha, 1 beta, 1 beta' and 1 omega subunit. When a sigma factor is associated with the core the holoenzyme is formed, which can initiate transcription.

It catalyses the reaction RNA(n) + a ribonucleoside 5'-triphosphate = RNA(n+1) + diphosphate. In terms of biological role, DNA-dependent RNA polymerase catalyzes the transcription of DNA into RNA using the four ribonucleoside triphosphates as substrates. This Leptospira biflexa serovar Patoc (strain Patoc 1 / Ames) protein is DNA-directed RNA polymerase subunit beta.